We begin with the raw amino-acid sequence, 565 residues long: Oxygen-dependent choline dehydrogenase (565 aa).

D7–E36 lines the FAD pocket. H474 acts as the Proton acceptor in catalysis.

The protein belongs to the GMC oxidoreductase family. FAD serves as cofactor.

It catalyses the reaction choline + A = betaine aldehyde + AH2. It carries out the reaction betaine aldehyde + NAD(+) + H2O = glycine betaine + NADH + 2 H(+). It participates in amine and polyamine biosynthesis; betaine biosynthesis via choline pathway; betaine aldehyde from choline (cytochrome c reductase route): step 1/1. Functionally, involved in the biosynthesis of the osmoprotectant glycine betaine. Catalyzes the oxidation of choline to betaine aldehyde and betaine aldehyde to glycine betaine at the same rate. This chain is Oxygen-dependent choline dehydrogenase, found in Burkholderia pseudomallei (strain K96243).